A 171-amino-acid chain; its full sequence is Large ribosomal subunit protein bL9 (171 aa).

It belongs to the bacterial ribosomal protein bL9 family.

In terms of biological role, binds to the 23S rRNA. The polypeptide is Large ribosomal subunit protein bL9 (Orientia tsutsugamushi (strain Ikeda) (Rickettsia tsutsugamushi)).